A 116-amino-acid polypeptide reads, in one-letter code: NADH-ubiquinone oxidoreductase chain 3 (116 aa).

3 consecutive transmembrane segments (helical) span residues 4 to 24, 56 to 76, and 88 to 108; these read IIII…AAHF, FFLV…LFPF, and VLYI…FEWT.

It belongs to the complex I subunit 3 family.

The protein resides in the mitochondrion membrane. It carries out the reaction a ubiquinone + NADH + 5 H(+)(in) = a ubiquinol + NAD(+) + 4 H(+)(out). In terms of biological role, core subunit of the mitochondrial membrane respiratory chain NADH dehydrogenase (Complex I) that is believed to belong to the minimal assembly required for catalysis. Complex I functions in the transfer of electrons from NADH to the respiratory chain. The immediate electron acceptor for the enzyme is believed to be ubiquinone. The chain is NADH-ubiquinone oxidoreductase chain 3 (ND3) from Pisaster ochraceus (Ochre sea star).